Reading from the N-terminus, the 224-residue chain is UPF0758 protein BPUM_2444 (224 aa).

Positions 102–224 constitute an MPN domain; the sequence is VIRTPEDGAN…FVSLKEKGYL (123 aa). Positions 173, 175, and 186 each coordinate Zn(2+). Positions 173–186 match the JAMM motif motif; the sequence is HNHPSGDPTPSRED.

The protein belongs to the UPF0758 family.

The sequence is that of UPF0758 protein BPUM_2444 from Bacillus pumilus (strain SAFR-032).